The primary structure comprises 38 residues: Antimicrobial peptide 1 (38 aa).

In terms of processing, disulfide bonds. As to expression, expressed in flowers but not in leaves, seeds or roots (at protein level).

Its function is as follows. Antimicrobial peptide. Active against fungal species B.cinerea (IC(50)=5.8 uM) and A.niger (IC(50)=5.6 uM) but not against F.oxysporum, F.graminearum, B.sorokinina and P.debaryanum at concentrations below 10 uM. Active against bacterial species P.syringae, B.subtilis and X.campestris. The polypeptide is Antimicrobial peptide 1 (Taraxacum officinale (Common dandelion)).